Here is a 154-residue protein sequence, read N- to C-terminus: Prefoldin subunit alpha (154 aa).

Over residues 92 to 102 (DNAVESLSTKQ) the composition is skewed to polar residues. Positions 92 to 154 (DNAVESLSTK…MQDQQPEDNE (63 aa)) are disordered. The segment covering 103 to 114 (DALDNRIESLRD) has biased composition (basic and acidic residues). Residues 128-148 (QQAQQMQQQMQQQQMQQMQDQ) are compositionally biased toward low complexity.

It belongs to the prefoldin subunit alpha family. Heterohexamer of two alpha and four beta subunits.

The protein localises to the cytoplasm. In terms of biological role, molecular chaperone capable of stabilizing a range of proteins. Seems to fulfill an ATP-independent, HSP70-like function in archaeal de novo protein folding. This is Prefoldin subunit alpha from Haloquadratum walsbyi (strain DSM 16790 / HBSQ001).